We begin with the raw amino-acid sequence, 250 residues long: 3-deoxy-manno-octulosonate cytidylyltransferase (250 aa).

The protein belongs to the KdsB family.

It is found in the cytoplasm. It carries out the reaction 3-deoxy-alpha-D-manno-oct-2-ulosonate + CTP = CMP-3-deoxy-beta-D-manno-octulosonate + diphosphate. It participates in nucleotide-sugar biosynthesis; CMP-3-deoxy-D-manno-octulosonate biosynthesis; CMP-3-deoxy-D-manno-octulosonate from 3-deoxy-D-manno-octulosonate and CTP: step 1/1. It functions in the pathway bacterial outer membrane biogenesis; lipopolysaccharide biosynthesis. Activates KDO (a required 8-carbon sugar) for incorporation into bacterial lipopolysaccharide in Gram-negative bacteria. The polypeptide is 3-deoxy-manno-octulosonate cytidylyltransferase (Sinorhizobium medicae (strain WSM419) (Ensifer medicae)).